Reading from the N-terminus, the 116-residue chain is Aspartate 1-decarboxylase (116 aa).

Ser-25 acts as the Schiff-base intermediate with substrate; via pyruvic acid in catalysis. Ser-25 bears the Pyruvic acid (Ser) mark. A substrate-binding site is contributed by Thr-57. Residue Tyr-58 is the Proton donor of the active site. Position 73–75 (73–75 (GAA)) interacts with substrate.

The protein belongs to the PanD family. Heterooctamer of four alpha and four beta subunits. Pyruvate is required as a cofactor. Is synthesized initially as an inactive proenzyme, which is activated by self-cleavage at a specific serine bond to produce a beta-subunit with a hydroxyl group at its C-terminus and an alpha-subunit with a pyruvoyl group at its N-terminus.

It is found in the cytoplasm. The catalysed reaction is L-aspartate + H(+) = beta-alanine + CO2. It functions in the pathway cofactor biosynthesis; (R)-pantothenate biosynthesis; beta-alanine from L-aspartate: step 1/1. Catalyzes the pyruvoyl-dependent decarboxylation of aspartate to produce beta-alanine. This is Aspartate 1-decarboxylase from Leptospira interrogans serogroup Icterohaemorrhagiae serovar Lai (strain 56601).